A 268-amino-acid chain; its full sequence is Small ribosomal subunit protein eS1 (268 aa).

Residues 1–21 form a disordered region; that stretch reads MAVGKNKGLSKGGKKGGKKKV.

Belongs to the eukaryotic ribosomal protein eS1 family. As to quaternary structure, component of the small ribosomal subunit. Mature ribosomes consist of a small (40S) and a large (60S) subunit. The 40S subunit contains about 33 different proteins and 1 molecule of RNA (18S). The 60S subunit contains about 49 different proteins and 3 molecules of RNA (28S, 5.8S and 5S).

The protein resides in the cytoplasm. Its function is as follows. Essential for oogenesis; required for late follicle cell development. The protein is Small ribosomal subunit protein eS1 of Drosophila mojavensis (Fruit fly).